Consider the following 362-residue polypeptide: 3-dehydroquinate synthase (362 aa).

NAD(+) contacts are provided by residues 71–76, 105–109, 129–130, K142, K151, and 169–172; these read DGEQYK, GVVGD, TT, and CLKT. Residues E184, H247, and H264 each coordinate Zn(2+).

Belongs to the sugar phosphate cyclases superfamily. Dehydroquinate synthase family. Co(2+) is required as a cofactor. It depends on Zn(2+) as a cofactor. NAD(+) serves as cofactor.

The protein resides in the cytoplasm. The enzyme catalyses 7-phospho-2-dehydro-3-deoxy-D-arabino-heptonate = 3-dehydroquinate + phosphate. The protein operates within metabolic intermediate biosynthesis; chorismate biosynthesis; chorismate from D-erythrose 4-phosphate and phosphoenolpyruvate: step 2/7. Catalyzes the conversion of 3-deoxy-D-arabino-heptulosonate 7-phosphate (DAHP) to dehydroquinate (DHQ). In Shigella dysenteriae serotype 1 (strain Sd197), this protein is 3-dehydroquinate synthase.